A 169-amino-acid polypeptide reads, in one-letter code: MQTRLRVYITGEPGVGKTTIFLKVIDKLKSQGYSISGFYCPEVREKGQRIGFKIKSLDNEVEDWLASIYAKSSIKIGKYYITINEDIINKIKEKISKSEIIGIDEIGPMELSVPKLKEIIDYVLNEKPIVVAVVHRKISFKDGKTFVVTYENRNRLDNEIFNYIISSIQ.

Residues 11–18 (GEPGVGKT) and 100–107 (IIGIDEIG) contribute to the ATP site.

This sequence belongs to the THEP1 NTPase family.

The enzyme catalyses a ribonucleoside 5'-triphosphate + H2O = a ribonucleoside 5'-diphosphate + phosphate + H(+). Functionally, has nucleotide phosphatase activity towards ATP, GTP, CTP, TTP and UTP. May hydrolyze nucleoside diphosphates with lower efficiency. The polypeptide is Nucleoside-triphosphatase THEP1 (Sulfurisphaera tokodaii (strain DSM 16993 / JCM 10545 / NBRC 100140 / 7) (Sulfolobus tokodaii)).